The primary structure comprises 363 residues: Translocating chain-associated membrane protein 1-like 1 (363 aa).

Topologically, residues M1–C29 are cytoplasmic. The helical transmembrane segment at V30–F50 threads the bilayer. Residues L51–A80 are Lumenal-facing. Residues T81–L101 traverse the membrane as a helical segment. Topologically, residues D102 to E120 are cytoplasmic. One can recognise a TLC domain in the interval N116 to D324. The chain crosses the membrane as a helical span at residues A121 to S141. The Lumenal segment spans residues E142 to M159. Residues M160–F179 traverse the membrane as a helical segment. Residues P180–D191 are Cytoplasmic-facing. A helical transmembrane segment spans residues I192 to L214. The Lumenal segment spans residues N215–G218. Residues L219–G241 form a helical membrane-spanning segment. Topologically, residues D242–S250 are cytoplasmic. The helical transmembrane segment at L251–V271 threads the bilayer. The Lumenal segment spans residues G272 to K295. The chain crosses the membrane as a helical span at residues I296–V316. At W317–P363 the chain is on the cytoplasmic side. The disordered stretch occupies residues A338–P363. Over residues S354–P363 the composition is skewed to basic and acidic residues.

It belongs to the TRAM family.

Its subcellular location is the endoplasmic reticulum membrane. In terms of biological role, stimulatory or required for the translocation of secretory proteins across the ER membrane. This Mus musculus (Mouse) protein is Translocating chain-associated membrane protein 1-like 1 (Tram1l1).